The primary structure comprises 592 residues: Methionine--tRNA ligase (592 aa).

The 'HIGH' region motif lies at 12–22 (PYANGPFHVGH). Zn(2+) is bound by residues C144, C147, C157, and C160. Positions 342–346 (KMSTS) match the 'KMSKS' region motif. An ATP-binding site is contributed by T345.

The protein belongs to the class-I aminoacyl-tRNA synthetase family. MetG type 1 subfamily. In terms of assembly, monomer. Requires Zn(2+) as cofactor.

Its subcellular location is the cytoplasm. It catalyses the reaction tRNA(Met) + L-methionine + ATP = L-methionyl-tRNA(Met) + AMP + diphosphate. Functionally, is required not only for elongation of protein synthesis but also for the initiation of all mRNA translation through initiator tRNA(fMet) aminoacylation. The chain is Methionine--tRNA ligase from Roseiflexus sp. (strain RS-1).